Here is a 172-residue protein sequence, read N- to C-terminus: NADH-ubiquinone oxidoreductase chain 6 (172 aa).

A run of 5 helical transmembrane segments spans residues 1-21 (MTYF…AVAS), 27-47 (YGVV…LSLG), 48-68 (VSFV…VVFV), 87-107 (VVGY…VGGF), and 138-158 (CGVG…FVVL).

The protein belongs to the complex I subunit 6 family.

The protein localises to the mitochondrion membrane. It carries out the reaction a ubiquinone + NADH + 5 H(+)(in) = a ubiquinol + NAD(+) + 4 H(+)(out). Its function is as follows. Core subunit of the mitochondrial membrane respiratory chain NADH dehydrogenase (Complex I) that is believed to belong to the minimal assembly required for catalysis. Complex I functions in the transfer of electrons from NADH to the respiratory chain. The immediate electron acceptor for the enzyme is believed to be ubiquinone. This is NADH-ubiquinone oxidoreductase chain 6 (MT-ND6) from Uria lomvia (Thick-billed murre).